A 791-amino-acid chain; its full sequence is AP-1 complex subunit gamma-like 2 (791 aa).

Positions 671–786 constitute a GAE domain; it reads APIPSVRVFE…QEIFEVDNLP (116 aa).

Belongs to the adaptor complexes large subunit family. May interact with AP1S1/Sigma1A-adaptin and AP1S2/Sigma1B-adaptin. Probably does not interact with APB1. Interacts (via GAE domain) with RABEP1, NECAP1, CLINT1 and AFTPH/aftiphilin. Interacts with HBV major surface antigen L. Interacts with HBV core protein C in a ubiquitin-dependent manner. Binds ubiquitin. As to expression, widely expressed.

It localises to the golgi apparatus membrane. The protein localises to the cytoplasmic vesicle membrane. Its subcellular location is the endosome membrane. Its function is as follows. May function in protein sorting in late endosomes or multivesucular bodies (MVBs). Involved in MVB-assisted maturation of hepatitis B virus (HBV). This Mus musculus (Mouse) protein is AP-1 complex subunit gamma-like 2 (Ap1g2).